Here is an 838-residue protein sequence, read N- to C-terminus: E3 ubiquitin-protein ligase RNF19A (838 aa).

The disordered stretch occupies residues 41–61 (DRDLQSSASSVSLPSVKKAPK). Residues 46 to 57 (SSASSVSLPSVK) are compositionally biased toward low complexity. Residues 128–351 (DFIECPLCLL…LSPSGCTFWG (224 aa)) form a TRIAD supradomain region. Zn(2+) contacts are provided by Cys-132, Cys-135, Cys-150, His-152, Cys-155, Cys-158, Cys-176, Cys-179, Cys-219, Cys-224, Cys-241, Cys-246, Cys-251, Cys-254, His-259, Cys-264, Cys-301, and Cys-304. The RING-type 1 zinc-finger motif lies at 132–179 (CPLCLLRHSKDRFPDIMTCHHRSCVDCLRQYLRIEISESRVNISCPEC). The IBR-type zinc-finger motif lies at 199–264 (EKYEEFMLRR…KQIWHPNQTC (66 aa)). Residues 301–332 (CPRCAAYIIKMNDGSCNHMTCAVCGCEFCWLC) form an RING-type 2; atypical zinc finger. Cys-316 is a catalytic residue. The Zn(2+) site is built by Cys-321, Cys-324, Cys-329, Cys-332, His-340, and Cys-347. A run of 2 helical transmembrane segments spans residues 368–388 (LVGA…AMII) and 424–444 (VIVS…IMLA). Disordered stretches follow at residues 622–685 (SKPS…GNMK) and 700–721 (QQST…PSVA). Positions 630-662 (NSGSSSVDDGSATRSHAGGSSSGLPEGKSSATK) are enriched in polar residues. Position 631 is a phosphoserine (Ser-631). An interaction with CASR region spans residues 660 to 838 (ATKWSKEATA…ELKVAIQTEI (179 aa)). The span at 671–683 (KKSKSGKLRKKGN) shows a compositional bias: basic residues. Residues 700–717 (QQSTNSSEFEAPSLSDSM) are compositionally biased toward polar residues.

Belongs to the RBR family. RNF19 subfamily. In terms of assembly, interacts with UBE2L3 and UBE2L6. Interacts with transcription factor Sp1. Interacts with VCP, CASR, SNCAIP and with some SOD1 variants which cause amyotrophic lateral sclerosis, but not with wild-type SOD1. As to expression, widely expressed, with highest levels in heart. Ubiquitously expressed in the central nervous system.

The protein resides in the membrane. Its subcellular location is the cytoplasm. It localises to the cytoskeleton. The protein localises to the microtubule organizing center. It is found in the centrosome. The enzyme catalyses [E2 ubiquitin-conjugating enzyme]-S-ubiquitinyl-L-cysteine + [acceptor protein]-L-lysine = [E2 ubiquitin-conjugating enzyme]-L-cysteine + [acceptor protein]-N(6)-ubiquitinyl-L-lysine.. The protein operates within protein modification; protein ubiquitination. Functionally, E3 ubiquitin-protein ligase which accepts ubiquitin from E2 ubiquitin-conjugating enzymes UBE2L3 and UBE2L6 in the form of a thioester and then directly transfers the ubiquitin to targeted substrates, such as SNCAIP or CASR. Specifically ubiquitinates pathogenic SOD1 variants, which leads to their proteasomal degradation and to neuronal protection. The polypeptide is E3 ubiquitin-protein ligase RNF19A (RNF19A) (Homo sapiens (Human)).